Consider the following 224-residue polypeptide: ATP-dependent dethiobiotin synthetase BioD (224 aa).

12–17 is an ATP binding site; it reads GVGKTF. Mg(2+) is bound at residue threonine 16. Lysine 37 is an active-site residue. Threonine 41 lines the substrate pocket. Position 107 (glutamate 107) interacts with Mg(2+). ATP contacts are provided by residues 107 to 110, 167 to 168, 197 to 199, and glutamate 204; these read EGAG, GS, and PEG.

Belongs to the dethiobiotin synthetase family. Homodimer. Mg(2+) is required as a cofactor.

It localises to the cytoplasm. It carries out the reaction (7R,8S)-7,8-diammoniononanoate + CO2 + ATP = (4R,5S)-dethiobiotin + ADP + phosphate + 3 H(+). It participates in cofactor biosynthesis; biotin biosynthesis; biotin from 7,8-diaminononanoate: step 1/2. In terms of biological role, catalyzes a mechanistically unusual reaction, the ATP-dependent insertion of CO2 between the N7 and N8 nitrogen atoms of 7,8-diaminopelargonic acid (DAPA, also called 7,8-diammoniononanoate) to form a ureido ring. The chain is ATP-dependent dethiobiotin synthetase BioD from Corynebacterium glutamicum (strain R).